Consider the following 147-residue polypeptide: MNIGEASKVSGVSSKMIRYYEQIGLISPAVRTASSYRTYGDNDVHTLRFIRRARDLGFSVEQIKELLALWRDRSRASSDVKAVALEHIAELERKIAAIQDMTRTLKHLASHCHGDGRPDCPIIEEMAKGGGAAKTEINPRFGVASLK.

The region spanning 1–69 (MNIGEASKVS…VEQIKELLAL (69 aa)) is the HTH merR-type domain. Positions 4–23 (GEASKVSGVSSKMIRYYEQI) form a DNA-binding region, H-T-H motif.

As to quaternary structure, homodimer.

It localises to the cytoplasm. In terms of biological role, regulates the transcription of actP. It detects cytoplasmic copper stress and activates transcription in response to increasing copper concentrations. In the absence of copper, it negatively regulates the transcription of actP. This Sinorhizobium medicae (strain WSM419) (Ensifer medicae) protein is HTH-type transcriptional regulator HmrR (hmrR).